The sequence spans 464 residues: Argininosuccinate lyase (464 aa).

The protein belongs to the lyase 1 family. Argininosuccinate lyase subfamily.

The protein localises to the cytoplasm. The catalysed reaction is 2-(N(omega)-L-arginino)succinate = fumarate + L-arginine. It functions in the pathway amino-acid biosynthesis; L-arginine biosynthesis; L-arginine from L-ornithine and carbamoyl phosphate: step 3/3. In Crocosphaera subtropica (strain ATCC 51142 / BH68) (Cyanothece sp. (strain ATCC 51142)), this protein is Argininosuccinate lyase.